The sequence spans 295 residues: Putative sugar uptake protein YxfA (295 aa).

10 helical membrane-spanning segments follow: residues 4–26 (VLLALVPMFAWGSIGFVANKFGG), 33–50 (LGMTLGAFVFALIVFLFR), 54–72 (LTWQIFLIGFIGGLLWAIG), 85–107 (VSVASPLSSGSQLVIGGLIGVFA), 117–135 (FILGFIAMAVLVVGFYFSA), 156–178 (ALTYSTLGYVIYVILFNNLAVLW), 188–206 (IILPMSVGMIFGALVMGRF), 213–235 (YVYQNMIVGAMWGVGNIFMLMAA), 241–263 (AIAFSFSQLGVIVSTIGGILFLG), and 270–291 (ELVYVGIGIVLFVTGAILLAIV).

The protein belongs to the GRP transporter (TC 2.A.7.5) family.

It is found in the cell membrane. The protein is Putative sugar uptake protein YxfA (yxfA) of Lactococcus lactis subsp. lactis (strain IL1403) (Streptococcus lactis).